Here is a 382-residue protein sequence, read N- to C-terminus: Galactokinase (382 aa).

34 to 37 (EHTD) provides a ligand contact to substrate. Residue 124-130 (GAGLSSS) participates in ATP binding. 2 residues coordinate Mg(2+): S130 and E162. Catalysis depends on D174, which acts as the Proton acceptor. Position 223 (Y223) interacts with substrate.

It belongs to the GHMP kinase family. GalK subfamily.

The protein resides in the cytoplasm. It carries out the reaction alpha-D-galactose + ATP = alpha-D-galactose 1-phosphate + ADP + H(+). The protein operates within carbohydrate metabolism; galactose metabolism. In terms of biological role, catalyzes the transfer of the gamma-phosphate of ATP to D-galactose to form alpha-D-galactose-1-phosphate (Gal-1-P). The sequence is that of Galactokinase from Escherichia coli O9:H4 (strain HS).